The sequence spans 497 residues: Di-/tripeptide transporter (497 aa).

The Cytoplasmic segment spans residues 1–36; that stretch reads MQNLNKTEKTFFGQPRGLLTLFQTEFWERFSYYGMR. The helical transmembrane segment at 37–55 threads the bilayer; that stretch reads AILVYYLYALTTADNAGLG. At 56–64 the chain is on the extracellular side; that stretch reads LPKAQAMAI. A helical transmembrane segment spans residues 65 to 83; that stretch reads VSIYGALVYLSTIVGGWVA. The Cytoplasmic segment spans residues 84 to 92; that stretch reads DRLLGASRT. The helical transmembrane segment at 93–111 threads the bilayer; it reads IFLGGILITLGHIALATPF. Residues 112–115 lie on the Extracellular side of the membrane; it reads GLSS. The helical transmembrane segment at 116–134 threads the bilayer; it reads LFVALFLIILGTGMLKPNI. At 135–154 the chain is on the cytoplasmic side; the sequence is SNMVGHLYSKDDSRRDTGFN. A helical transmembrane segment spans residues 155–173; it reads IFVVGINMGSLIAPLIVGT. Topologically, residues 174–181 are extracellular; it reads VGQGVNYH. Residues 182–200 form a helical membrane-spanning segment; sequence LGFSLAAIGMIFALFAYWY. Residues 201–224 are Cytoplasmic-facing; that stretch reads GRLRHFPEIGREPSNPMDSKARRN. Residues 225-243 form a helical membrane-spanning segment; the sequence is FLITLTIVVIVAIIGFFLL. The Extracellular segment spans residues 244 to 254; sequence YQASPANFINN. A helical membrane pass occupies residues 255 to 273; sequence FINVLSIIGIVVPIIYFVM. Over 274–293 the chain is Cytoplasmic; that stretch reads MFTSKKVESDERRKLTAYIP. The helical transmembrane segment at 294 to 312 threads the bilayer; that stretch reads LFLSAIVFWAIEEQSSTII. Residues 313–335 lie on the Extracellular side of the membrane; it reads AVWGESRSNLDPTWFGITFHIDP. A helical membrane pass occupies residues 336-354; sequence SWYQLLNPLFIVLLSPIFV. At 355–372 the chain is on the cytoplasmic side; it reads RLWNKLGERQPSTIVKFG. The chain crosses the membrane as a helical span at residues 373–391; that stretch reads LGLMLTGISYLIMTLPGLL. Topologically, residues 392–425 are extracellular; the sequence is NGTSGRASALWLVLMFAVQMAGELLVSPVGLSVS. A helical membrane pass occupies residues 426-444; that stretch reads TKLAPVAFQSQMMAMWFLA. The Cytoplasmic segment spans residues 445 to 497; it reads DSTSQAINAQITPLFKAATEVHFFAITGIIGIIVGIILLIVKKPILKLMGDVR.

The protein belongs to the major facilitator superfamily. Proton-dependent oligopeptide transporter (POT/PTR) (TC 2.A.17) family.

It localises to the cell membrane. Functionally, proton-dependent uptake of di- or tri-peptides. The chain is Di-/tripeptide transporter (dtpT) from Lactococcus lactis subsp. lactis (strain IL1403) (Streptococcus lactis).